We begin with the raw amino-acid sequence, 259 residues long: Sorbitol-6-phosphate 2-dehydrogenase (259 aa).

4 to 33 (VAVVIGGGQTLGAFLCHGLAAEGYRVAVVD) provides a ligand contact to NAD(+). Serine 141 contributes to the substrate binding site. Tyrosine 154 serves as the catalytic Proton acceptor.

It belongs to the short-chain dehydrogenases/reductases (SDR) family. As to quaternary structure, homotetramer.

The enzyme catalyses D-sorbitol 6-phosphate + NAD(+) = beta-D-fructose 6-phosphate + NADH + H(+). Its pathway is carbohydrate metabolism; D-sorbitol degradation; D-fructose 6-phosphate from D-sorbitol 6-phosphate: step 1/1. The chain is Sorbitol-6-phosphate 2-dehydrogenase (srlD) from Escherichia coli (strain K12).